Consider the following 99-residue polypeptide: Large ribosomal subunit protein uL23 (99 aa).

Belongs to the universal ribosomal protein uL23 family. In terms of assembly, part of the 50S ribosomal subunit. Contacts protein L29, and trigger factor when it is bound to the ribosome.

One of the early assembly proteins it binds 23S rRNA. One of the proteins that surrounds the polypeptide exit tunnel on the outside of the ribosome. Forms the main docking site for trigger factor binding to the ribosome. The polypeptide is Large ribosomal subunit protein uL23 (Pseudomonas savastanoi pv. phaseolicola (strain 1448A / Race 6) (Pseudomonas syringae pv. phaseolicola (strain 1448A / Race 6))).